The chain runs to 740 residues: Ion-translocating oxidoreductase complex subunit C (740 aa).

4Fe-4S ferredoxin-type domains lie at 369–397 and 407–436; these read GEPQEEQSCIRCSACADACPADLLPQQLY and KATTHNIADCIECGACAWVCPSNIPLVQYF. C377, C380, C383, C387, C416, C419, C422, and C426 together coordinate [4Fe-4S] cluster. Disordered regions lie at residues 602 to 621 and 660 to 718; these read KLEQQQANAKPEEQVDPRKA and ARAK…RKAA. Residues 611-621 are compositionally biased toward basic and acidic residues; sequence KPEEQVDPRKA.

This sequence belongs to the 4Fe4S bacterial-type ferredoxin family. RnfC subfamily. As to quaternary structure, the complex is composed of six subunits: RsxA, RsxB, RsxC, RsxD, RsxE and RsxG. [4Fe-4S] cluster is required as a cofactor.

It is found in the cell inner membrane. Its function is as follows. Part of a membrane-bound complex that couples electron transfer with translocation of ions across the membrane. Required to maintain the reduced state of SoxR. The protein is Ion-translocating oxidoreductase complex subunit C of Escherichia coli O9:H4 (strain HS).